A 182-amino-acid chain; its full sequence is ADP-ribosylation factor-like protein 3 (182 aa).

Residue Gly-2 is the site of N-myristoyl glycine attachment. The residue at position 5 (Ser-5) is a Phosphoserine. Residues 24–31 (GLDNAGKT), Thr-48, 67–71 (DIGGQ), Gly-70, 126–129 (NKQD), and 159–161 (SAL) each bind GTP. Positions 31 and 48 each coordinate Mg(2+).

The protein belongs to the small GTPase superfamily. Arf family. Found in a complex with ARL3, RP2 and UNC119 (or UNC119B); RP2 induces hydrolysis of GTP ARL3 in the complex, leading to the release of UNC119 (or UNC119B). Interacts with RP2; interaction is direct and stimulated with the activated GTP-bound form of ARL3. Interacts with SYS1. Interacts with ARL2BP; the GTP-bound form interacts with ARL2BP. Microtubule-associated protein. Does not interact with TBCC. Interacts with RP2. Interacts with PDE6D; the interaction occurs specifically with the GTP-bound form of ARL3. Interacts with GGA1; the interaction recruits PKD1:PKD2 complex to trans-Golgi network and is required for ciliary targeting of PKD1:PKD2 complex. Interacts with DNAAF9.

The protein localises to the golgi apparatus membrane. Its subcellular location is the cytoplasm. It is found in the cytoskeleton. The protein resides in the spindle. It localises to the nucleus. The protein localises to the microtubule organizing center. Its subcellular location is the centrosome. It is found in the cell projection. The protein resides in the cilium. Small GTP-binding protein which cycles between an inactive GDP-bound and an active GTP-bound form, and the rate of cycling is regulated by guanine nucleotide exchange factors (GEF) and GTPase-activating proteins (GAP). Required for normal cytokinesis and cilia signaling. Requires assistance from GTPase-activating proteins (GAPs) like RP2 and PDE6D, in order to cycle between inactive GDP-bound and active GTP-bound forms. Required for targeting proteins to the cilium, including myristoylated NPHP3 and prenylated INPP5E. Targets NPHP3 to the ciliary membrane by releasing myristoylated NPHP3 from UNC119B cargo adapter into the cilium. Required for PKD1:PKD2 complex targeting from the trans-Golgi network to the cilium. The sequence is that of ADP-ribosylation factor-like protein 3 (ARL3) from Sus scrofa (Pig).